The primary structure comprises 207 residues: VAVKKIMKPFSTPVLAKRTYRELKLLKHLKHENVISLSDIFISPLEDIYFVTELLGTDLHRLLTSRPLEKQFIQYFLYQIMRGLKYVHSAGVVHRDLKPSNILVNENCDLKICDFGLARIQDPQMTGYVSTRYYRAPEIMLTWQKYDVEVDIWSAGCIFAEMLEGKPLFPGKDHVNQFSIITELLGTPPDDVINTIASENTLRFVKS.

Residues 1–207 form the Protein kinase domain; that stretch reads VAVKKIMKPF…SENTLRFVKS (207 aa). Residue Lys-4 participates in ATP binding. Asp-96 (proton acceptor) is an active-site residue. Phosphothreonine is present on Thr-126. Residues 126–128 carry the TXY motif; the sequence is TGY. Tyr-128 carries the phosphotyrosine modification.

The protein belongs to the protein kinase superfamily. Ser/Thr protein kinase family. MAP kinase subfamily. HOG1 sub-subfamily. The cofactor is Mg(2+). Dually phosphorylated on Thr-126 and Tyr-128, which activates the enzyme.

The protein resides in the cytoplasm. It localises to the nucleus. It carries out the reaction L-seryl-[protein] + ATP = O-phospho-L-seryl-[protein] + ADP + H(+). The catalysed reaction is L-threonyl-[protein] + ATP = O-phospho-L-threonyl-[protein] + ADP + H(+). With respect to regulation, activated by tyrosine and threonine phosphorylation. Its function is as follows. Proline-directed serine/threonine-protein kinase involved in a signal transduction pathway that is activated by changes in the osmolarity of the extracellular environment. Controls osmotic regulation of transcription of target genes. The sequence is that of Mitogen-activated protein kinase HOG1 (HOG1) from Fusarium culmorum.